Here is a 375-residue protein sequence, read N- to C-terminus: Aminomethyltransferase (375 aa).

It belongs to the GcvT family. As to quaternary structure, the glycine cleavage system is composed of four proteins: P, T, L and H.

The enzyme catalyses N(6)-[(R)-S(8)-aminomethyldihydrolipoyl]-L-lysyl-[protein] + (6S)-5,6,7,8-tetrahydrofolate = N(6)-[(R)-dihydrolipoyl]-L-lysyl-[protein] + (6R)-5,10-methylene-5,6,7,8-tetrahydrofolate + NH4(+). Functionally, the glycine cleavage system catalyzes the degradation of glycine. The polypeptide is Aminomethyltransferase (Cupriavidus metallidurans (strain ATCC 43123 / DSM 2839 / NBRC 102507 / CH34) (Ralstonia metallidurans)).